Reading from the N-terminus, the 1486-residue chain is Chromosome partition protein MukB (1486 aa).

34–41 (GGNGAGKS) provides a ligand contact to ATP. Coiled coils occupy residues 326-418 (LEAD…QYNQ), 444-480 (LETF…QAYQ), and 509-603 (RHLA…RAPV). Residues 666 to 783 (PGGSEDQRLN…EVPLFGRAAR (118 aa)) are flexible hinge. Coiled-coil stretches lie at residues 835–923 (EAEI…AKLE), 977–1115 (EMLS…TAKA), and 1209–1266 (VEAI…QNVS).

Belongs to the SMC family. MukB subfamily. In terms of assembly, homodimerization via its hinge domain. Binds to DNA via its C-terminal region. Interacts, and probably forms a ternary complex, with MukE and MukF via its C-terminal region. The complex formation is stimulated by calcium or magnesium. Interacts with tubulin-related protein FtsZ.

It is found in the cytoplasm. The protein localises to the nucleoid. In terms of biological role, plays a central role in chromosome condensation, segregation and cell cycle progression. Functions as a homodimer, which is essential for chromosome partition. Involved in negative DNA supercoiling in vivo, and by this means organize and compact chromosomes. May achieve or facilitate chromosome segregation by condensation DNA from both sides of a centrally located replisome during cell division. This is Chromosome partition protein MukB from Escherichia coli O127:H6 (strain E2348/69 / EPEC).